The following is a 104-amino-acid chain: UPF0213 protein PA3854 (104 aa).

Residues 13–88 (KCWSVYLVRA…KALSKRAKER (76 aa)) enclose the GIY-YIG domain.

This sequence belongs to the UPF0213 family.

The chain is UPF0213 protein PA3854 from Pseudomonas aeruginosa (strain ATCC 15692 / DSM 22644 / CIP 104116 / JCM 14847 / LMG 12228 / 1C / PRS 101 / PAO1).